A 356-amino-acid chain; its full sequence is Delta(7)-sterol 5(6)-desaturase (356 aa).

3 consecutive transmembrane segments (helical) span residues 87–107 (LTLYLITWLFGVCVYYLFAGL), 134–154 (QANIAFPIMAIFTVPWFLAEV), and 171–191 (WYDYLQIPFFIAFTDLCIYWI). Residues 179–303 (FFIAFTDLCI…FTTLWDRLGG (125 aa)) enclose the Fatty acid hydroxylase domain. Residues 192–196 (HRGLH) carry the Histidine box-1 motif. The Histidine box-2 signature appears at 205-209 (HKPHH). Residues 235 to 255 (YIFPFLFPLSKIASVAFFVFV) form a helical membrane-spanning segment. The Histidine box-3 signature appears at 280–284 (HTMHH).

The protein belongs to the sterol desaturase family. The cofactor is Fe cation.

The protein localises to the endoplasmic reticulum membrane. It carries out the reaction a Delta(7)-sterol + 2 Fe(II)-[cytochrome b5] + O2 + 2 H(+) = a Delta(5),Delta(7)-sterol + 2 Fe(III)-[cytochrome b5] + 2 H2O. It participates in steroid metabolism; ergosterol biosynthesis; ergosterol from zymosterol: step 3/5. In terms of biological role, catalyzes the introduction of a C-5 double bond in the B ring of ergosterol. May contribute to the regulation of ergosterol biosynthesis. The chain is Delta(7)-sterol 5(6)-desaturase (ERG3) from Leptosphaeria maculans (Blackleg fungus).